Reading from the N-terminus, the 269-residue chain is Ribosomal RNA small subunit methyltransferase A (269 aa).

Positions 12, 14, 39, 60, 81, and 103 each coordinate S-adenosyl-L-methionine.

Belongs to the class I-like SAM-binding methyltransferase superfamily. rRNA adenine N(6)-methyltransferase family. RsmA subfamily.

Its subcellular location is the cytoplasm. The catalysed reaction is adenosine(1518)/adenosine(1519) in 16S rRNA + 4 S-adenosyl-L-methionine = N(6)-dimethyladenosine(1518)/N(6)-dimethyladenosine(1519) in 16S rRNA + 4 S-adenosyl-L-homocysteine + 4 H(+). Its function is as follows. Specifically dimethylates two adjacent adenosines (A1518 and A1519) in the loop of a conserved hairpin near the 3'-end of 16S rRNA in the 30S particle. May play a critical role in biogenesis of 30S subunits. The sequence is that of Ribosomal RNA small subunit methyltransferase A from Leptothrix cholodnii (strain ATCC 51168 / LMG 8142 / SP-6) (Leptothrix discophora (strain SP-6)).